Consider the following 345-residue polypeptide: Trace amine-associated receptor 6 (345 aa).

The Extracellular portion of the chain corresponds to 1 to 32 (MSSNSSLLVAVQLCYANVNGSCVKIPFSPGSR). Residues asparagine 4 and asparagine 19 are each glycosylated (N-linked (GlcNAc...) asparagine). Disulfide bonds link cysteine 22/cysteine 186 and cysteine 105/cysteine 190. A helical membrane pass occupies residues 33–53 (VILYIVFGFGAVLAVFGNLLV). The Cytoplasmic portion of the chain corresponds to 54–68 (MISILHFKQLHSPTN). A helical membrane pass occupies residues 69–89 (FLVASLACADFLVGVTVMPFS). The Extracellular portion of the chain corresponds to 90–107 (MVRTVESCWYFGRSFCTF). The helical transmembrane segment at 108–128 (HTCCDVAFCYSSLFHLCFISI) threads the bilayer. The Cytoplasmic portion of the chain corresponds to 129-147 (DRYIAVTDPLVYPTKFTVS). The helical transmembrane segment at 148–168 (VSGICISVSWILPLMYSGAVF) threads the bilayer. The Extracellular segment spans residues 169–202 (YTGVYDDGLEELSDALNCIGGCQTVVNQNWVLTD). The helical transmembrane segment at 203-223 (FLSFFIPTFIMIILYGNIFLV) threads the bilayer. Residues 224–259 (ARRQAKKIENTGSKTESSSESYKARVARRERKAAKT) lie on the Cytoplasmic side of the membrane. Residues 260–276 (LGVTVVAFMISWLPYSI) form a helical membrane-spanning segment. The Extracellular portion of the chain corresponds to 277 to 282 (DSLIDA). A helical transmembrane segment spans residues 283-302 (FMGFITPACIYEICCWCAYY). The Cytoplasmic portion of the chain corresponds to 303–345 (NSAMNPLIYALFYPWFRKAIKVIVTGQVLKNSSATMNLFSEHI).

This sequence belongs to the G-protein coupled receptor 1 family. As to expression, expressed at low abundance in various brain tissues, as well as in fetal liver, but not in the cerebellum or placenta. In the brain, comparable levels of expression in basal ganglia, frontal cortex, substantia nigra, amygdala and hippocampus, highest expression in hippocampus and lowest expression in basal ganglia.

It is found in the cell membrane. Olfactory receptor specific for trace amines, such as beta-phenylethylamine (beta-PEA). Trace amine compounds are enriched in animal body fluids and act on trace amine-associated receptors (TAARs) to elicit both intraspecific and interspecific innate behaviors. Beta-PEA-binding causes a conformation change that triggers signaling via G(s)-class of G alpha proteins (GNAL or GNAS). The sequence is that of Trace amine-associated receptor 6 from Homo sapiens (Human).